A 1829-amino-acid polypeptide reads, in one-letter code: Iron-regulated protein FrpC (1829 aa).

Hemolysin-type calcium-binding repeat units follow at residues 869–886 (FGHN…NDTL), 887–904 (IGGA…SDTY), 1015–1032 (NGGL…DDLL), 1033–1050 (NGDA…NDTL), 1051–1068 (DGGE…NDAL), 1069–1086 (NGGE…NDTL), 1087–1104 (IGGA…SDTY), 1215–1232 (NGGL…DDLL), 1233–1250 (NGDA…NDTL), 1251–1268 (DGGE…NDAL), 1269–1286 (NGGE…NDTL), 1287–1304 (IGGA…SDTY), 1415–1432 (NGGL…DDLL), 1433–1450 (NGDA…NDTL), 1451–1468 (NGGE…NDAL), 1469–1486 (NGGE…NDTL), 1487–1504 (IGGA…SDTY), 1615–1632 (NGGL…DDLL), 1633–1650 (NGDA…NDTL), 1651–1668 (DGGE…NDAL), 1669–1686 (NGGE…NDTL), and 1687–1704 (IGGA…SDTY). The interval 1671 to 1690 (GEGNDHLNGEDGNDTLIGGA) is disordered.

The protein belongs to the RTX prokaryotic toxin (TC 1.C.11) family.

Its subcellular location is the cell outer membrane. The protein localises to the secreted. Its function is as follows. May participate in the pathogenesis of meningococcal disease. In Neisseria meningitidis serogroup B (strain ATCC BAA-335 / MC58), this protein is Iron-regulated protein FrpC (frpC).